The primary structure comprises 294 residues: MPWLQVRLAITPEQAETYEDALLEVGAVSVTFMDAEDQPIFEPDLGTTPLWSRTHLLALFEADTDETALLAHLALLTGGDLPEHHVEEIADQDWERSWMDNFQPMRFGRRLWIVPSWHAAPEPDAVNLLLDPGLAFGTGTHPTTALCLEWLDGQELAGRQVLDFGCGSGILAIAALLLGAERAVGTDIDPQALEASRDNASRNGIEPARFPVYLPADLPQRQADVLVANILAGPLVSLAPQLTGLVRPGGLLALSGILAEQAEEVRAAYSAHFDLDPTAEREGWIRISGRRRAD.

S-adenosyl-L-methionine-binding residues include T144, G165, D187, and N229.

Belongs to the methyltransferase superfamily. PrmA family.

It is found in the cytoplasm. The enzyme catalyses L-lysyl-[protein] + 3 S-adenosyl-L-methionine = N(6),N(6),N(6)-trimethyl-L-lysyl-[protein] + 3 S-adenosyl-L-homocysteine + 3 H(+). Its function is as follows. Methylates ribosomal protein L11. In Pseudomonas aeruginosa (strain LESB58), this protein is Ribosomal protein L11 methyltransferase.